Consider the following 206-residue polypeptide: Large ribosomal subunit protein uL4 (206 aa).

The protein belongs to the universal ribosomal protein uL4 family. In terms of assembly, part of the 50S ribosomal subunit.

In terms of biological role, one of the primary rRNA binding proteins, this protein initially binds near the 5'-end of the 23S rRNA. It is important during the early stages of 50S assembly. It makes multiple contacts with different domains of the 23S rRNA in the assembled 50S subunit and ribosome. Its function is as follows. Forms part of the polypeptide exit tunnel. This chain is Large ribosomal subunit protein uL4, found in Desulfatibacillum aliphaticivorans.